We begin with the raw amino-acid sequence, 472 residues long: H(+)/Cl(-) exchange transporter ClcA (472 aa).

Over 1–32 the chain is Cytoplasmic; sequence MKAETPSFEAHQFVRVRRGDAVRRLIQRDKTP. The helical transmembrane segment at 33-69 threads the bilayer; sequence LAVLLMAAVVGTLAGLVGVAFEKSVNWVQNQRIGALA. The Periplasmic portion of the chain corresponds to 70–76; sequence QVADHWY. Residues 77-100 traverse the membrane as a helical segment; sequence LVWPLAFILSALLAMVGYFLVRRF. A Selectivity filter part_1 motif is present at residues 106-110; the sequence is GSGIP. Position 107 (Ser107) interacts with chloride. The segment at residues 109 to 116 is an intramembrane region (helical); sequence IPEIEGAL. At 117–123 the chain is on the cytoplasmic side; it reads EELRPVR. The next 2 membrane-spanning stretches (helical) occupy residues 124–141 and 148–166; these read WWRV…TLGA and EGPM…LDIF. Residues 146–150 carry the Selectivity filter part_2 motif; sequence GREGP. The Cytoplasmic portion of the chain corresponds to 167-176; sequence RMRSPEARHT. 2 intramembrane regions (helical) span residues 177–189 and 193–201; these read LLAT…LSAA and PLAGILFII. Residues 202–214 are Cytoplasmic-facing; that stretch reads EEMRPQFRYNLIS. A helical transmembrane segment spans residues 215–232; it reads IKAVFTGVIMSSIVFRIF. At 233-252 the chain is on the periplasmic side; that stretch reads NGEAAIIEVGKLSNAPVNTL. A helical transmembrane segment spans residues 253–281; it reads WLYLVLGMLFGCFGPLFNFLVLRTQDIFQ. The Cytoplasmic portion of the chain corresponds to 282–287; it reads RIHGGN. A helical transmembrane segment spans residues 288 to 309; the sequence is IKTWVLMGGVIGGICGLLGLMQ. At 310–329 the chain is on the periplasmic side; it reads PSAVGGGFNLIPIAAAGNFS. Transmembrane regions (helical) follow at residues 330-349 and 355-376; these read VGLL…ICFS and GIFA…MAAI. Positions 355–359 match the Selectivity filter part_3 motif; that stretch reads GIFAP. 2 residues coordinate chloride: Ile356 and Phe357. The Periplasmic portion of the chain corresponds to 377 to 386; it reads PLFPAYHLDA. An intramembrane region (helical) is located at residues 387–401; it reads GTFAIAGMGALLAAS. Residues 402–404 constitute an intramembrane region (note=Loop between two helices); the sequence is VRA. Positions 405 to 416 form an intramembrane region, helical; that stretch reads PLTGIVLVLEMT. Positions 417 to 421 form an intramembrane region, note=Loop between two helices; sequence DNYQL. The helical transmembrane segment at 422–438 threads the bilayer; sequence ILPMIITCLGATLLAQF. Residues 439 to 472 are Cytoplasmic-facing; sequence LGGKPLYSTILQRTLAKQEAEQAAKAQQAPRENT. Position 445 (Tyr445) interacts with chloride.

Belongs to the chloride channel (TC 2.A.49) family. ClcA subfamily. Homodimer.

Its subcellular location is the cell inner membrane. The catalysed reaction is 2 chloride(in) + H(+)(out) = 2 chloride(out) + H(+)(in). In terms of biological role, proton-coupled chloride transporter. Functions as antiport system and exchanges two chloride ions for 1 proton. Probably acts as an electrical shunt for an outwardly-directed proton pump that is linked to amino acid decarboxylation, as part of the extreme acid resistance (XAR) response. The protein is H(+)/Cl(-) exchange transporter ClcA of Klebsiella pneumoniae (strain 342).